The primary structure comprises 785 residues: E3 UFM1-protein ligase 1 homolog (785 aa).

The disordered stretch occupies residues 404–483; the sequence is GGNASNQLDD…GGGGSNKKSV (80 aa).

The protein belongs to the UFL1 family.

E3 UFM1-protein ligase that mediates ufmylation of target proteins. This Drosophila willistoni (Fruit fly) protein is E3 UFM1-protein ligase 1 homolog.